Reading from the N-terminus, the 416-residue chain is Nonsense-mediated decay protein 4 (416 aa).

Disordered regions lie at residues 1–21 (MSLY…NYHD), 195–218 (QHPI…YNNS), and 356–393 (DRPS…ANGD). Residues 12-21 (EARKNSNYHD) show a composition bias toward basic and acidic residues. Over residues 360 to 375 (KSKNKNKNKNTKKSTK) the composition is skewed to basic residues.

The protein localises to the cytoplasm. Its function is as follows. Involved in nonsense-mediated decay of mRNAs containing premature stop codons. This chain is Nonsense-mediated decay protein 4 (NMD4), found in Debaryomyces hansenii (strain ATCC 36239 / CBS 767 / BCRC 21394 / JCM 1990 / NBRC 0083 / IGC 2968) (Yeast).